The chain runs to 315 residues: Heme oxygenase 2 (315 aa).

Acidic residues predominate over residues 1-12 (MSSEVETSEGVD). The interval 1 to 28 (MSSEVETSEGVDESEKNSMAPEKENHTK) is disordered. Position 2 is an N-acetylserine (serine 2). Serine 2 carries the phosphoserine modification. The Cytoplasmic segment spans residues 2–294 (SSEVETSEGV…TTVAVLRKPS (293 aa)). Residues 13-28 (ESEKNSMAPEKENHTK) show a composition bias toward basic and acidic residues. The heme b site is built by histidine 44, tyrosine 153, lysine 198, and arginine 202. 2 HRM repeats span residues 263–268 (KCPFYA) and 280–285 (NCPFQT). Cysteine 264 and cysteine 281 each carry S-nitrosocysteine. A helical; Anchor for type IV membrane protein membrane pass occupies residues 295–315 (LQLILAASVALVAGLLAWYYM).

This sequence belongs to the heme oxygenase family. Post-translationally, a soluble form arises by proteolytic removal of the membrane anchor. S-nitrosylated by BLVRB. In terms of tissue distribution, ubiquitous.

It is found in the microsome membrane. The protein localises to the endoplasmic reticulum membrane. It catalyses the reaction heme b + 3 reduced [NADPH--hemoprotein reductase] + 3 O2 = biliverdin IXalpha + CO + Fe(2+) + 3 oxidized [NADPH--hemoprotein reductase] + 3 H2O + H(+). Functionally, catalyzes the oxidative cleavage of heme at the alpha-methene bridge carbon, released as carbon monoxide (CO), to generate biliverdin IXalpha, while releasing the central heme iron chelate as ferrous iron. The polypeptide is Heme oxygenase 2 (Hmox2) (Mus musculus (Mouse)).